Here is a 203-residue protein sequence, read N- to C-terminus: Protein GrpE (203 aa).

It belongs to the GrpE family. Homodimer.

Its subcellular location is the cytoplasm. In terms of biological role, participates actively in the response to hyperosmotic and heat shock by preventing the aggregation of stress-denatured proteins, in association with DnaK and GrpE. It is the nucleotide exchange factor for DnaK and may function as a thermosensor. Unfolded proteins bind initially to DnaJ; upon interaction with the DnaJ-bound protein, DnaK hydrolyzes its bound ATP, resulting in the formation of a stable complex. GrpE releases ADP from DnaK; ATP binding to DnaK triggers the release of the substrate protein, thus completing the reaction cycle. Several rounds of ATP-dependent interactions between DnaJ, DnaK and GrpE are required for fully efficient folding. The sequence is that of Protein GrpE from Pseudoalteromonas translucida (strain TAC 125).